A 238-amino-acid polypeptide reads, in one-letter code: DNA repair protein RecO (238 aa).

Belongs to the RecO family.

In terms of biological role, involved in DNA repair and RecF pathway recombination. The sequence is that of DNA repair protein RecO from Hahella chejuensis (strain KCTC 2396).